Here is a 208-residue protein sequence, read N- to C-terminus: Uracil phosphoribosyltransferase (208 aa).

Residues Arg78, Arg103, and 130 to 138 (DPMLATGGS) each bind 5-phospho-alpha-D-ribose 1-diphosphate. Residues Ile193 and 198-200 (GDA) each bind uracil. Asp199 is a 5-phospho-alpha-D-ribose 1-diphosphate binding site.

The protein belongs to the UPRTase family. It depends on Mg(2+) as a cofactor.

The catalysed reaction is UMP + diphosphate = 5-phospho-alpha-D-ribose 1-diphosphate + uracil. The protein operates within pyrimidine metabolism; UMP biosynthesis via salvage pathway; UMP from uracil: step 1/1. Allosterically activated by GTP. Catalyzes the conversion of uracil and 5-phospho-alpha-D-ribose 1-diphosphate (PRPP) to UMP and diphosphate. In Shewanella halifaxensis (strain HAW-EB4), this protein is Uracil phosphoribosyltransferase.